The sequence spans 383 residues: Pyruvate synthase subunit PorA (383 aa).

In terms of assembly, heterotetramer of one alpha, one beta, one delta and one gamma chain.

It carries out the reaction 2 oxidized [2Fe-2S]-[ferredoxin] + pyruvate + CoA = 2 reduced [2Fe-2S]-[ferredoxin] + acetyl-CoA + CO2 + H(+). The polypeptide is Pyruvate synthase subunit PorA (porA) (Methanothermobacter thermautotrophicus (strain ATCC 29096 / DSM 1053 / JCM 10044 / NBRC 100330 / Delta H) (Methanobacterium thermoautotrophicum)).